The following is a 142-amino-acid chain: Large ribosomal subunit protein uL11 (142 aa).

The protein belongs to the universal ribosomal protein uL11 family. As to quaternary structure, part of the ribosomal stalk of the 50S ribosomal subunit. Interacts with L10 and the large rRNA to form the base of the stalk. L10 forms an elongated spine to which L12 dimers bind in a sequential fashion forming a multimeric L10(L12)X complex. Post-translationally, one or more lysine residues are methylated.

Its function is as follows. Forms part of the ribosomal stalk which helps the ribosome interact with GTP-bound translation factors. This chain is Large ribosomal subunit protein uL11, found in Afipia carboxidovorans (strain ATCC 49405 / DSM 1227 / KCTC 32145 / OM5) (Oligotropha carboxidovorans).